Here is a 697-residue protein sequence, read N- to C-terminus: Elongation factor G 2 (697 aa).

The region spanning 5-280 (SKYRNIGIFA…AVVDYLPDPV (276 aa)) is the tr-type G domain. GTP is bound by residues 14 to 21 (AHVDAGKT), 78 to 82 (DTPGH), and 132 to 135 (NKLD).

The protein belongs to the TRAFAC class translation factor GTPase superfamily. Classic translation factor GTPase family. EF-G/EF-2 subfamily.

The protein resides in the cytoplasm. In terms of biological role, catalyzes the GTP-dependent ribosomal translocation step during translation elongation. During this step, the ribosome changes from the pre-translocational (PRE) to the post-translocational (POST) state as the newly formed A-site-bound peptidyl-tRNA and P-site-bound deacylated tRNA move to the P and E sites, respectively. Catalyzes the coordinated movement of the two tRNA molecules, the mRNA and conformational changes in the ribosome. The sequence is that of Elongation factor G 2 from Shewanella frigidimarina (strain NCIMB 400).